A 313-amino-acid polypeptide reads, in one-letter code: Aspartate carbamoyltransferase catalytic subunit (313 aa).

2 residues coordinate carbamoyl phosphate: arginine 58 and threonine 59. Lysine 86 contributes to the L-aspartate binding site. Residues arginine 108, histidine 136, and glutamine 139 each coordinate carbamoyl phosphate. L-aspartate-binding residues include arginine 169 and arginine 223. Glycine 264 and proline 265 together coordinate carbamoyl phosphate.

This sequence belongs to the aspartate/ornithine carbamoyltransferase superfamily. ATCase family. In terms of assembly, heterododecamer (2C3:3R2) of six catalytic PyrB chains organized as two trimers (C3), and six regulatory PyrI chains organized as three dimers (R2).

The enzyme catalyses carbamoyl phosphate + L-aspartate = N-carbamoyl-L-aspartate + phosphate + H(+). The protein operates within pyrimidine metabolism; UMP biosynthesis via de novo pathway; (S)-dihydroorotate from bicarbonate: step 2/3. Catalyzes the condensation of carbamoyl phosphate and aspartate to form carbamoyl aspartate and inorganic phosphate, the committed step in the de novo pyrimidine nucleotide biosynthesis pathway. The protein is Aspartate carbamoyltransferase catalytic subunit of Ruminiclostridium cellulolyticum (strain ATCC 35319 / DSM 5812 / JCM 6584 / H10) (Clostridium cellulolyticum).